A 219-amino-acid chain; its full sequence is Deoxyribose-phosphate aldolase (219 aa).

Aspartate 93 acts as the Proton donor/acceptor in catalysis. Lysine 154 (schiff-base intermediate with acetaldehyde) is an active-site residue. Catalysis depends on lysine 179, which acts as the Proton donor/acceptor.

Belongs to the DeoC/FbaB aldolase family. DeoC type 1 subfamily.

The protein localises to the cytoplasm. The catalysed reaction is 2-deoxy-D-ribose 5-phosphate = D-glyceraldehyde 3-phosphate + acetaldehyde. It participates in carbohydrate degradation; 2-deoxy-D-ribose 1-phosphate degradation; D-glyceraldehyde 3-phosphate and acetaldehyde from 2-deoxy-alpha-D-ribose 1-phosphate: step 2/2. Catalyzes a reversible aldol reaction between acetaldehyde and D-glyceraldehyde 3-phosphate to generate 2-deoxy-D-ribose 5-phosphate. The polypeptide is Deoxyribose-phosphate aldolase (Haloquadratum walsbyi (strain DSM 16790 / HBSQ001)).